A 173-amino-acid polypeptide reads, in one-letter code: MILSGKEILKHIGEDIIIEPFSEERINPNSYNLTLFNELLVYKNDTLDMKIPNETEKLIIPEEGLLLEPGKLYLGRTNEFTQTNKYVPMLEGRSSTGRLGLFIHVTAGFGDIGFAGYWTLEIFCVQPIRIYPNTEICQIYYHNIDGEYDLYNSGKYQNNNGIQPSLMYKDFEK.

DCTP-binding positions include 93 to 98, Asp111, 119 to 121, Gln138, and Tyr151; these read RSSTGR and TLE. The active-site Proton donor/acceptor is the Glu121.

The protein belongs to the dCTP deaminase family. As to quaternary structure, homotrimer.

It carries out the reaction dCTP + 2 H2O = dUMP + NH4(+) + diphosphate. It functions in the pathway pyrimidine metabolism; dUMP biosynthesis; dUMP from dCTP: step 1/1. Bifunctional enzyme that catalyzes both the deamination of dCTP to dUTP and the hydrolysis of dUTP to dUMP without releasing the toxic dUTP intermediate. The protein is dCTP deaminase, dUMP-forming of Clostridium botulinum (strain Alaska E43 / Type E3).